We begin with the raw amino-acid sequence, 220 residues long: MOB kinase activator-like 3 (220 aa).

Residues C83, C88, H165, and H170 each coordinate Zn(2+).

Belongs to the MOB1/phocein family.

In Drosophila melanogaster (Fruit fly), this protein is MOB kinase activator-like 3 (Mob3).